A 447-amino-acid polypeptide reads, in one-letter code: Phosphoglucosamine mutase (447 aa).

Catalysis depends on serine 100, which acts as the Phosphoserine intermediate. Residues serine 100, aspartate 239, aspartate 241, and aspartate 243 each contribute to the Mg(2+) site. At serine 100 the chain carries Phosphoserine.

This sequence belongs to the phosphohexose mutase family. Mg(2+) is required as a cofactor. Activated by phosphorylation.

The enzyme catalyses alpha-D-glucosamine 1-phosphate = D-glucosamine 6-phosphate. Its function is as follows. Catalyzes the conversion of glucosamine-6-phosphate to glucosamine-1-phosphate. This is Phosphoglucosamine mutase from Thermoanaerobacter pseudethanolicus (strain ATCC 33223 / 39E) (Clostridium thermohydrosulfuricum).